A 322-amino-acid polypeptide reads, in one-letter code: uncharacterized protein (322 aa).

The disordered stretch occupies residues 174-207 (LQSRPTEGAKVSTNGRGFSSRPTGEGNFFGPKGR). The span at 184–195 (VSTNGRGFSSRP) shows a compositional bias: polar residues.

It is found in the mitochondrion. This is an uncharacterized protein from Marchantia polymorpha (Common liverwort).